Consider the following 134-residue polypeptide: Sec-independent protein translocase protein TatB (134 aa).

The helical transmembrane segment at 2 to 22 threads the bilayer; it reads FDGIGFMELLLIGILGLVVLG. Residues 90 to 134 form a disordered region; it reads AESVNRPYKVEDTSPVAPKASPDESPSVVEAKSSEATSENSSTPK. Residues 123–134 show a composition bias toward polar residues; sequence SEATSENSSTPK.

Belongs to the TatB family. In terms of assembly, the Tat system comprises two distinct complexes: a TatABC complex, containing multiple copies of TatA, TatB and TatC subunits, and a separate TatA complex, containing only TatA subunits. Substrates initially bind to the TatABC complex, which probably triggers association of the separate TatA complex to form the active translocon.

It localises to the cell inner membrane. Part of the twin-arginine translocation (Tat) system that transports large folded proteins containing a characteristic twin-arginine motif in their signal peptide across membranes. Together with TatC, TatB is part of a receptor directly interacting with Tat signal peptides. TatB may form an oligomeric binding site that transiently accommodates folded Tat precursor proteins before their translocation. In Shewanella frigidimarina (strain NCIMB 400), this protein is Sec-independent protein translocase protein TatB.